The sequence spans 382 residues: Acetylserotonin O-methyltransferase (382 aa).

5 residues coordinate S-adenosyl-L-homocysteine: Gly-218, Asp-241, Asp-261, Met-262, and Lys-275. The active-site Proton acceptor is the His-279. Residues Glu-308 and Glu-347 contribute to the active site.

It belongs to the class I-like SAM-binding methyltransferase superfamily. Cation-independent O-methyltransferase family.

It is found in the cytoplasm. The enzyme catalyses N-acetylserotonin + S-adenosyl-L-methionine = melatonin + S-adenosyl-L-homocysteine + H(+). It functions in the pathway aromatic compound metabolism; melatonin biosynthesis; melatonin from serotonin: step 1/2. In terms of biological role, methyltransferase which catalyzes the transfer of a methyl group onto N-acetylserotonin, producing melatonin (N-acetyl-5-methoxytryptamine). Does not seem to possess caffeate O-methyltransferase activity. Implicated in melatonin-dependent circadian dynamics of stomatal aperture to minimize night water loss and promote drought tolerance. Prevents seed germination by promoting melatonin biosynthesis. Promotes melatonin-triggered defense responses to the necrotrophic fungus Botrytis cinerea. Functionally, (Microbial infection) Promotes melatonin-triggered defense responses to the necrotrophic fungus Botrytis cinerea. The sequence is that of Acetylserotonin O-methyltransferase from Arabidopsis thaliana (Mouse-ear cress).